We begin with the raw amino-acid sequence, 192 residues long: Type-4 uracil-DNA glycosylase (192 aa).

[4Fe-4S] cluster-binding residues include Cys18 and Cys21. Residues 45–47, Phe59, and Asn85 contribute to the uracil site; that span reads GEG. [4Fe-4S] cluster contacts are provided by Cys89 and Cys105. His161 is a binding site for uracil.

Belongs to the uracil-DNA glycosylase (UDG) superfamily. Type 4 (UDGa) family.

The enzyme catalyses Hydrolyzes single-stranded DNA or mismatched double-stranded DNA and polynucleotides, releasing free uracil.. Removes uracil bases that are present in DNA as a result of either deamination of cytosine or misincorporation of dUMP instead of dTMP. Can remove uracil from double-stranded DNA containing either a U/G or U/A base pair as well as from single-stranded DNA. The polypeptide is Type-4 uracil-DNA glycosylase (Thermotoga maritima (strain ATCC 43589 / DSM 3109 / JCM 10099 / NBRC 100826 / MSB8)).